Reading from the N-terminus, the 366-residue chain is Glutamate 5-kinase (366 aa).

Lys17 provides a ligand contact to ATP. Positions 57, 144, and 156 each coordinate substrate. Residues 176 to 177 (SD) and 216 to 222 (TGGMASK) contribute to the ATP site. The PUA domain occupies 278 to 352 (RGALVLDDGA…GRSTTELPDT (75 aa)).

It belongs to the glutamate 5-kinase family.

It is found in the cytoplasm. It carries out the reaction L-glutamate + ATP = L-glutamyl 5-phosphate + ADP. The protein operates within amino-acid biosynthesis; L-proline biosynthesis; L-glutamate 5-semialdehyde from L-glutamate: step 1/2. Functionally, catalyzes the transfer of a phosphate group to glutamate to form L-glutamate 5-phosphate. The sequence is that of Glutamate 5-kinase from Nocardia farcinica (strain IFM 10152).